A 251-amino-acid polypeptide reads, in one-letter code: Octanoyltransferase (251 aa).

A BPL/LPL catalytic domain is found at 56–241 (ADTGDEIWVV…NLDGASAAAD (186 aa)). Substrate contacts are provided by residues 96–103 (RGGQITYH), 168–170 (ALG), and 181–183 (GLS). Residue C199 is the Acyl-thioester intermediate of the active site.

Belongs to the LipB family.

It is found in the cytoplasm. It catalyses the reaction octanoyl-[ACP] + L-lysyl-[protein] = N(6)-octanoyl-L-lysyl-[protein] + holo-[ACP] + H(+). It participates in protein modification; protein lipoylation via endogenous pathway; protein N(6)-(lipoyl)lysine from octanoyl-[acyl-carrier-protein]: step 1/2. Functionally, catalyzes the transfer of endogenously produced octanoic acid from octanoyl-acyl-carrier-protein onto the lipoyl domains of lipoate-dependent enzymes. Lipoyl-ACP can also act as a substrate although octanoyl-ACP is likely to be the physiological substrate. In Burkholderia cenocepacia (strain HI2424), this protein is Octanoyltransferase.